Consider the following 194-residue polypeptide: uncharacterized protein (194 aa).

The 61-residue stretch at 6 to 66 folds into the HTH tetR-type domain; it reads EFDTALVLHR…SAVKSYLEGK (61 aa). A DNA-binding region (H-T-H motif) is located at residues 29-48; sequence SLQDLLSHLGIARQSLYDTY.

This is an uncharacterized protein from Bacillus subtilis (strain 168).